The primary structure comprises 136 residues: MPARRKARKRALDVLFEADLRDRPPVEVLAGYVERLEKPRPEHLGYAVGLVEGIAVHLDRLDELIASYAEGWTLDRMPAVDRNLARIAVYELLYVDEIDDAVAISEAVELARQMSTDDSPRFLNGILGRIAEYATR.

Belongs to the NusB family.

In terms of biological role, involved in transcription antitermination. Required for transcription of ribosomal RNA (rRNA) genes. Binds specifically to the boxA antiterminator sequence of the ribosomal RNA (rrn) operons. The polypeptide is Transcription antitermination protein NusB (Salinispora arenicola (strain CNS-205)).